We begin with the raw amino-acid sequence, 305 residues long: Lysosomal thioesterase PPT2 (305 aa).

Positions 1–32 (MLGLPERRLPSAEFLLLLPFLLLLLLLLPAAP) are cleaved as a signal peptide. Intrachain disulfides connect Cys112-Cys120 and Cys168-Cys179. Ser114 functions as the Nucleophile in the catalytic mechanism. Asn193 is a glycosylation site (N-linked (GlcNAc...) asparagine). Active-site residues include Asp231 and His286. A disulfide bridge links Cys279 with Cys299.

It belongs to the palmitoyl-protein thioesterase family.

Its subcellular location is the lysosome. It catalyses the reaction hexadecanoyl-CoA + H2O = hexadecanoate + CoA + H(+). The enzyme catalyses S-hexadecanoyl-N-acetylcysteamine + H2O = N-acetylcysteamine + hexadecanoate + H(+). Catalyzes the cleavage of thioester bonds from S-palmitoyl-CoA or S-palmitoyl-N-acetylcysteamine (unbranched structures) but does not have activity against palmitoylcysteine or palmitoylated proteins, branched structures or bulky head groups. Conversely, hydrolyzes both long and short chain fatty acyl-CoA substrate. The protein is Lysosomal thioesterase PPT2 (PPT2) of Bos taurus (Bovine).